The following is a 315-amino-acid chain: MQRRTRGINTGLLLLLSQVFQIGINNIPPVTLATLAVNVWFFLNPWKPLYHSCISVEKCYQQKDWQRLLLSPLHHGDDWHLYFNMVSMLWKGVKLERRLGSRWFAYVIATFSLLTGVVYLLLQFTVAELLNQPDFKRNCAVGFSGVLFALKVLSNHYCPGGFVNILGFPVPNRFACWAELVAIHFCTPGTSFAGHLAGILVGLMYTQGPLKKIMDTCAGIFISHAGPSGQQNHFNNAGPSGYQNHYADGRPVTYDATYRNYDVYTAGLSEEEQLERALRASIWDRGNTRNGPMPYGFRLPPEEMRRQRLHRFDGQ.

The Cytoplasmic portion of the chain corresponds to Met-1–Gln-21. Residues Ile-22 to Phe-42 traverse the membrane as a helical segment. At Leu-43–Trp-103 the chain is on the lumenal side. The helical transmembrane segment at Phe-104–Phe-124 threads the bilayer. Over Thr-125–Arg-137 the chain is Cytoplasmic. A helical transmembrane segment spans residues Asn-138–Ser-154. The active-site Nucleophile is Ser-144. Over Asn-155–Leu-180 the chain is Lumenal. A helical membrane pass occupies residues Val-181–Val-201. His-195 is a catalytic residue. The Cytoplasmic portion of the chain corresponds to Gly-202 to Gln-315. The ubiquitin-binding domain (UBD) stretch occupies residues Ser-269–Asp-284. The tract at residues Pro-301–Gln-315 is VCP/p97-interacting motif (VIM).

The protein belongs to the peptidase S54 family. Interacts with BIK and STEAP3. Interacts (via C-terminal domain) with VCP/P97. Interacts with ubiquitin and ubiquitinated proteins. In terms of tissue distribution, expressed in testis (at protein level). Expressed in intestine, lung, brain, kidney, epididymis, stomach, muscle, spleen, liver, heart and testis.

It is found in the endoplasmic reticulum membrane. Its subcellular location is the mitochondrion membrane. It carries out the reaction Cleaves type-1 transmembrane domains using a catalytic dyad composed of serine and histidine that are contributed by different transmembrane domains.. With respect to regulation, inhibited by aprotinin. Intramembrane-cleaving serine protease that cleaves single transmembrane or multi-pass membrane proteins in the hydrophobic plane of the membrane, luminal loops and juxtamembrane regions. Involved in regulated intramembrane proteolysis and the subsequent release of functional polypeptides from their membrane anchors. Functional component of endoplasmic reticulum-associated degradation (ERAD) for misfolded membrane proteins. Required for the degradation process of some specific misfolded endoplasmic reticulum (ER) luminal proteins. Participates in the transfer of misfolded proteins from the ER to the cytosol, where they are destroyed by the proteasome in a ubiquitin-dependent manner. Functions in BIK, MPZ, PKD1, PTCRA, RHO, STEAP3 and TRAC processing. Involved in the regulation of exosomal secretion; inhibits the TSAP6-mediated secretion pathway. Involved in the regulation of apoptosis; modulates BIK-mediated apoptotic activity. Also plays a role in the regulation of spermatogenesis; inhibits apoptotic activity in spermatogonia. The sequence is that of Rhomboid-related protein 4 (Rhbdd1) from Mus musculus (Mouse).